Reading from the N-terminus, the 423-residue chain is GTPase HflX (423 aa).

A Hflx-type G domain is found at proline 202–lysine 366. GTP-binding positions include glycine 208–serine 215, phenylalanine 233–aspartate 237, aspartate 255–glycine 258, asparagine 321–aspartate 324, and serine 344–lysine 346. Mg(2+) is bound by residues serine 215 and threonine 235.

Belongs to the TRAFAC class OBG-HflX-like GTPase superfamily. HflX GTPase family. As to quaternary structure, monomer. Associates with the 50S ribosomal subunit. Mg(2+) is required as a cofactor.

The protein localises to the cytoplasm. Functionally, GTPase that associates with the 50S ribosomal subunit and may have a role during protein synthesis or ribosome biogenesis. The sequence is that of GTPase HflX from Lacrimispora saccharolytica (strain ATCC 35040 / DSM 2544 / NRCC 2533 / WM1) (Clostridium saccharolyticum).